A 317-amino-acid polypeptide reads, in one-letter code: L-lactate dehydrogenase (317 aa).

Residues 16–17 (FV), Asp-38, Lys-43, Tyr-69, and 83–84 (GA) contribute to the NAD(+) site. Positions 86 and 92 each coordinate substrate. NAD(+)-binding positions include Ser-105, 122–124 (ATN), and Ser-147. 124–127 (NPVD) lines the substrate pocket. A substrate-binding site is contributed by 152–155 (DTAR). Beta-D-fructose 1,6-bisphosphate contacts are provided by residues Arg-157 and 169–172 (QNVH). His-179 functions as the Proton acceptor in the catalytic mechanism. Tyr-224 is modified (phosphotyrosine). Substrate is bound at residue Thr-233.

Belongs to the LDH/MDH superfamily. LDH family. As to quaternary structure, exists as a dimer and a tetramer (dimer of dimers). The conversion occurs via the binding of fructose 1,6-bisphosphate (FBP) to the dimer.

It localises to the cytoplasm. The enzyme catalyses (S)-lactate + NAD(+) = pyruvate + NADH + H(+). Its pathway is fermentation; pyruvate fermentation to lactate; (S)-lactate from pyruvate: step 1/1. With respect to regulation, allosterically activated by fructose 1,6-bisphosphate (FBP). The improvement in affinity for substrate occurs in two steps; the binding of fructose 1,6-bisphosphate (FBP) to the dimer, and the dimer to tetramer conversion. Catalyzes the conversion of lactate to pyruvate. The polypeptide is L-lactate dehydrogenase (Geobacillus stearothermophilus (Bacillus stearothermophilus)).